The primary structure comprises 493 residues: Guanosine-5'-triphosphate,3'-diphosphate pyrophosphatase (493 aa).

Belongs to the GppA/Ppx family. GppA subfamily.

The enzyme catalyses guanosine 3'-diphosphate 5'-triphosphate + H2O = guanosine 3',5'-bis(diphosphate) + phosphate + H(+). Its pathway is purine metabolism; ppGpp biosynthesis; ppGpp from GTP: step 2/2. Catalyzes the conversion of pppGpp to ppGpp. Guanosine pentaphosphate (pppGpp) is a cytoplasmic signaling molecule which together with ppGpp controls the 'stringent response', an adaptive process that allows bacteria to respond to amino acid starvation, resulting in the coordinated regulation of numerous cellular activities. This is Guanosine-5'-triphosphate,3'-diphosphate pyrophosphatase from Salmonella choleraesuis (strain SC-B67).